The primary structure comprises 210 residues: ATP phosphoribosyltransferase (210 aa).

The protein belongs to the ATP phosphoribosyltransferase family. Short subfamily. As to quaternary structure, heteromultimer composed of HisG and HisZ subunits.

It is found in the cytoplasm. It carries out the reaction 1-(5-phospho-beta-D-ribosyl)-ATP + diphosphate = 5-phospho-alpha-D-ribose 1-diphosphate + ATP. It participates in amino-acid biosynthesis; L-histidine biosynthesis; L-histidine from 5-phospho-alpha-D-ribose 1-diphosphate: step 1/9. In terms of biological role, catalyzes the condensation of ATP and 5-phosphoribose 1-diphosphate to form N'-(5'-phosphoribosyl)-ATP (PR-ATP). Has a crucial role in the pathway because the rate of histidine biosynthesis seems to be controlled primarily by regulation of HisG enzymatic activity. This Caldanaerobacter subterraneus subsp. tengcongensis (strain DSM 15242 / JCM 11007 / NBRC 100824 / MB4) (Thermoanaerobacter tengcongensis) protein is ATP phosphoribosyltransferase.